We begin with the raw amino-acid sequence, 623 residues long: NADPH-dependent diflavin oxidoreductase 1 (623 aa).

The 162-residue stretch at 7–168 (IVILYGSETG…VYFEYEKKVL (162 aa)) folds into the Flavodoxin-like domain. Residues 13 to 18 (SETGNA), 60 to 63 (STTG), 106 to 115 (LGDSSYPKFN), and Asp-142 contribute to the FMN site. An FAD-binding FR-type domain is found at 224–491 (ESLKVGRVNI…VGPGVGLAPL (268 aa)). FAD contacts are provided by residues Arg-383, 413–416 (RYYS), and 445–448 (GICT). NADP(+) is bound at residue 538-539 (SR). An FAD-binding site is contributed by Trp-623.

It belongs to the NADPH-dependent diflavin oxidoreductase NDOR1 family. The protein in the N-terminal section; belongs to the flavodoxin family. In the C-terminal section; belongs to the flavoprotein pyridine nucleotide cytochrome reductase family. In terms of assembly, interacts with DRE2; as part of the cytosolic iron-sulfur (Fe-S) protein assembly (CIA) machinery. FAD is required as a cofactor. It depends on FMN as a cofactor.

Its subcellular location is the cytoplasm. It is found in the mitochondrion. The catalysed reaction is 2 oxidized [2Fe-2S]-[protein] + NADPH = 2 reduced [2Fe-2S]-[protein] + NADP(+) + H(+). Functionally, NADPH-dependent reductase which is a central component of the cytosolic iron-sulfur (Fe-S) protein assembly (CIA) machinery. Transfers electrons from NADPH via its FAD and FMN prosthetic groups to the [2Fe-2S] cluster of DRE2, another key component of the CIA machinery. In turn, this reduced cluster provides electrons for assembly of cytosolic iron-sulfur cluster proteins. Positively controls H(2)O(2)-induced cell death. The protein is NADPH-dependent diflavin oxidoreductase 1 of Saccharomyces cerevisiae (strain ATCC 204508 / S288c) (Baker's yeast).